A 223-amino-acid chain; its full sequence is Deoxyribose-phosphate aldolase (223 aa).

Aspartate 91 acts as the Proton donor/acceptor in catalysis. Catalysis depends on lysine 153, which acts as the Schiff-base intermediate with acetaldehyde. Catalysis depends on lysine 182, which acts as the Proton donor/acceptor.

This sequence belongs to the DeoC/FbaB aldolase family. DeoC type 1 subfamily.

It localises to the cytoplasm. It catalyses the reaction 2-deoxy-D-ribose 5-phosphate = D-glyceraldehyde 3-phosphate + acetaldehyde. The protein operates within carbohydrate degradation; 2-deoxy-D-ribose 1-phosphate degradation; D-glyceraldehyde 3-phosphate and acetaldehyde from 2-deoxy-alpha-D-ribose 1-phosphate: step 2/2. Catalyzes a reversible aldol reaction between acetaldehyde and D-glyceraldehyde 3-phosphate to generate 2-deoxy-D-ribose 5-phosphate. The polypeptide is Deoxyribose-phosphate aldolase (Streptococcus pyogenes serotype M3 (strain ATCC BAA-595 / MGAS315)).